Consider the following 502-residue polypeptide: 1-aminocyclopropane-1-carboxylate synthase-like protein 1 (502 aa).

Residues 1–24 (MFCLPQQESTAPTTCTGSASTQDM) form a disordered region. Residue E106 coordinates substrate. K324 is modified (N6-(pyridoxal phosphate)lysine).

This sequence belongs to the class-I pyridoxal-phosphate-dependent aminotransferase family.

Functionally, does not catalyze the synthesis of 1-aminocyclopropane-1-carboxylate but is capable of catalyzing the deamination of L-vinylglycine. The sequence is that of 1-aminocyclopropane-1-carboxylate synthase-like protein 1 (Accs) from Mus musculus (Mouse).